The chain runs to 481 residues: Molybdate-anion transporter (481 aa).

12 helical membrane-spanning segments follow: residues 1–21, 47–67, 80–100, 131–151, 180–200, 201–221, 276–296, 306–326, 341–361, 371–391, 403–423, and 443–463; these read MFVT…ALEI, LFLK…PYLY, IAIL…VAGW, FMLI…TTTF, WNYG…EWLG, LGPV…AWFV, VMLL…FVFL, PPLG…STLF, LLCL…FSTV, LLAF…VSFL, AVLA…LLAL, and FAGC…LFTV.

The protein belongs to the major facilitator superfamily.

Its subcellular location is the cell membrane. Its function is as follows. Mediates high-affinity intracellular uptake of the rare oligo-element molybdenum. The protein is Molybdate-anion transporter (mfsd5) of Danio rerio (Zebrafish).